Reading from the N-terminus, the 196-residue chain is Flagellin B2 (196 aa).

Positions 1–12 (MFEFITDEDERG) are excised as a propeptide.

It belongs to the archaeal flagellin family. Glycosylated.

The protein resides in the archaeal flagellum. Flagellin is the subunit protein which polymerizes to form the filaments of archaeal flagella. The sequence is that of Flagellin B2 (flaB2) from Halobacterium salinarum (strain ATCC 700922 / JCM 11081 / NRC-1) (Halobacterium halobium).